A 326-amino-acid chain; its full sequence is MPNSTAQYPEKDSWEFLVKSGIAGGTAGCVAKSVVAPLDRVKILYQTNHASYRGYAYSRHGLYKAIKHIYHVYGLHGLYQGHTATLYRVFPYAGIKFVAYEQVRRVLIRDPEHETHARRFLSGSLAGTCSVFFTYPLELIRVRLAYITNTGKNPTLTQVTKDIFHERDFLCNKKYPGLSRLSKICNFYRGFSVTLTGIFPYAGMSFLAYDLATDFFHKQKIDEWVSTKKSDKKLKTWPELLCGAFAGVCGQTVSYPFEVCRRKMQIGGIRKNKSFLRLKQVVQTTYKEAGMRGFFVGLTIGYIKVIPMVSTSFFVYNHSKALLGID.

Solcar repeat units follow at residues 15-106, 114-215, and 234-322; these read EFLV…VRRV, ETHA…ATDF, and LKTW…SKAL. Transmembrane regions (helical) follow at residues 16 to 36, 83 to 103, 120 to 140, 191 to 211, 240 to 260, and 294 to 314; these read FLVK…SVVA, TATL…YEQV, FLSG…LELI, FSVT…AYDL, LLCG…FEVC, and FFVG…TSFF.

This sequence belongs to the mitochondrial carrier (TC 2.A.29) family.

It is found in the mitochondrion inner membrane. This is an uncharacterized protein from Schizosaccharomyces pombe (strain 972 / ATCC 24843) (Fission yeast).